Consider the following 413-residue polypeptide: MSLLHHLVTLPSRPITRDAYLPQLQNLLRSGIPATYTLEQLAAYEKGDEEGPGDEDTNTTPLHIMARSLPEAGQLSEAESEVVLEIMDTLFQYGAGWNFLDYEQKHAGDLLLEKGYGPGDALYERLVEAGVAAELLLRKVNGGEIEFLDGSDTEMGDKGGSARDVPASADSAPADSAGHSSSEPTAVDADATAAHQDTYLQTELEYIPGALVTKHNRDGVMMDWETDIMRVAAASIVKNREPAECQVLNIGFGMGIIDGFLQEQRPTRHYICEAHPDVLARMRREGWYERPDVVILEGRWQDTLSRLLDDGTVFFDGIYYDTFSEHYTDMLELYDLVVGLIKPCGIFSFFNGLGADRQVCYDVYRRIVELDMATYGMTCEYTTIDLRQLPTWDNVRRSYFNCDHYYHPEISFQ.

The tract at residues 148 to 187 (LDGSDTEMGDKGGSARDVPASADSAPADSAGHSSSEPTAV) is disordered. The span at 162 to 182 (ARDVPASADSAPADSAGHSSS) shows a compositional bias: low complexity. The region spanning 192-413 (TAAHQDTYLQ…HYYHPEISFQ (222 aa)) is the RMT2 domain. S-adenosyl-L-methionine is bound by residues Y199, M229, 252-257 (FGMGII), 273-275 (EAH), 300-301 (WQ), and D321.

Belongs to the class I-like SAM-binding methyltransferase superfamily. RMT2 methyltransferase family. In terms of assembly, monomer.

Its subcellular location is the cytoplasm. It is found in the nucleus. Functionally, S-adenosyl-L-methionine-dependent protein-arginine N-methyltransferase that methylates the delta-nitrogen atom of arginine residues to form N5-methylarginine (type IV) in target proteins. Monomethylates ribosomal protein L12. In Eremothecium gossypii (strain ATCC 10895 / CBS 109.51 / FGSC 9923 / NRRL Y-1056) (Yeast), this protein is Protein arginine N-methyltransferase 2.